The sequence spans 119 residues: MARIKGGIATHKRHKKVLALTKGHASARHSLFKRAHESMVHAMSYAFAHRRARKGDMRRLWITRINAAARAEGLTYGELMSGLKTAGIDINRKVLADMAVSDSVAFAAVAAKAAAAKAN.

It belongs to the bacterial ribosomal protein bL20 family.

Its function is as follows. Binds directly to 23S ribosomal RNA and is necessary for the in vitro assembly process of the 50S ribosomal subunit. It is not involved in the protein synthesizing functions of that subunit. The polypeptide is Large ribosomal subunit protein bL20 (Dehalococcoides mccartyi (strain ATCC BAA-2266 / KCTC 15142 / 195) (Dehalococcoides ethenogenes (strain 195))).